A 196-amino-acid polypeptide reads, in one-letter code: Mpv17-like protein (196 aa).

Residues 1 to 16 (MAGWWPALSRAARRHP) are Cytoplasmic-facing. Positions 16 to 55 (PWPTNVLLYGSLVSAGDALQQRLQGREANWRQTRRVATLV) are targeting to peroxisomes. Residues 17–34 (WPTNVLLYGSLVSAGDAL) form a helical membrane-spanning segment. At 35 to 50 (QQRLQGREANWRQTRR) the chain is on the lumenal side. Residues 51–67 (VATLVVTFHANFNYVWL) form a helical membrane-spanning segment. At 68-90 (RLLERALPGRAPHALLAKLLCDQ) the chain is on the cytoplasmic side. Residues 91 to 108 (VVGAPIAVSAFYVGMSIL) traverse the membrane as a helical segment. The Lumenal portion of the chain corresponds to 109–150 (QGKDDIFLDLKQKFWNTYLSGLMYWPFVQLTNFSLVPVQWRT). A helical membrane pass occupies residues 151–167 (AYAGVCGFLWATFICFS). The Cytoplasmic portion of the chain corresponds to 168–196 (QQSGDGTFKSAFTILYTKGTSATEGYPKK).

This sequence belongs to the peroxisomal membrane protein PXMP2/4 family. Isoform 1 is detected in the kidney (at protein level). Isoform 1 and isoform 2 are expressed in the kidney, heart, liver, lung, pancreas and skeletal muscle.

It localises to the peroxisome membrane. Its function is as follows. Participates in reactive oxygen species metabolism by up- or down-regulation of the genes of antioxidant enzymes. Protective against the mitochondrial apoptotic cascade. The protein is Mpv17-like protein (MPV17L) of Homo sapiens (Human).